Reading from the N-terminus, the 1052-residue chain is Ubiquitin-like modifier-activating enzyme 6 (1052 aa).

Methionine 1 carries the N-acetylmethionine modification. Residues 1–21 form a disordered region; that stretch reads MEGSEPVAAHQGEEASCSSWG. Arginine 46 is an ATP binding site. Phosphothreonine is present on threonine 54. At serine 301 the chain carries Phosphoserine. The ATP site is built by alanine 470 and aspartate 497. Residues aspartate 499 and glutamate 502 each contribute to the Mg(2+) site. ATP-binding residues include asparagine 505, arginine 508, glutamine 509, and lysine 521. Position 544 is an N6-acetyllysine (lysine 544). Residue valine 545 coordinates ATP. Mg(2+) is bound at residue aspartate 569. Asparagine 570 lines the ATP pocket. Cysteine 625 acts as the Glycyl thioester intermediate in catalysis. Lysine 729 carries the N6-acetyllysine modification. Serine 737 is subject to Phosphoserine.

This sequence belongs to the ubiquitin-activating E1 family. In terms of assembly, forms a thioester with UBD in cells stimulated with tumor necrosis factor-alpha (TNFa) and interferon-gamma (IFNg). Widely expressed. Isoform 2 is predominantly expressed in testis with higher expression in adult testis than in fetal testis.

The catalysed reaction is ATP + ubiquitin + [E1 ubiquitin-activating enzyme]-L-cysteine = AMP + diphosphate + S-ubiquitinyl-[E1 ubiquitin-activating enzyme]-L-cysteine.. It functions in the pathway protein modification; protein ubiquitination. Its function is as follows. Activates ubiquitin by first adenylating its C-terminal glycine residue with ATP, and thereafter linking this residue to the side chain of a cysteine residue in E1, yielding a ubiquitin-E1 thioester and free AMP. Specific for ubiquitin, does not activate ubiquitin-like peptides. Also activates UBD/FAT10 conjugation via adenylation of its C-terminal glycine. Differs from UBE1 in its specificity for substrate E2 charging. Does not charge cell cycle E2s, such as CDC34. Essential for embryonic development. Isoform 2 may play a key role in ubiquitin system and may influence spermatogenesis and male fertility. In Homo sapiens (Human), this protein is Ubiquitin-like modifier-activating enzyme 6 (UBA6).